The following is a 189-amino-acid chain: MTDKTEKVAVDPETVFKRPRECDSPSYQKRQRMALLARKQGAGDSLIAGSAMSKAKKLMTGHAIPPSQLDSQIDDFTGFSKDRMMQKPGSNAPVGGNVTSSFSGDDLECRETASSPKSQREINADIKRKLVKELRCVGQKYEKIFEMLEGVQGPTAVRKRFFESIIKEAARCMRRDFVKHLKKKLKRMI.

Residues 1-23 (MTDKTEKVAVDPETVFKRPRECD) are compositionally biased toward basic and acidic residues. Disordered stretches follow at residues 1-27 (MTDK…SPSY) and 83-118 (RMMQ…SPKS).

The protein belongs to the CT45 family. Testis specific. Expressed in cancer cell lines.

It is found in the nucleus. This is Cancer/testis antigen family 45 member A1 from Homo sapiens (Human).